The sequence spans 186 residues: Hydra actinoporin-like toxin 5 (186 aa).

Residues 1-20 (MLLYVCLVNLLLQSPSGVDS) form the signal peptide. A Cell attachment site motif is present at residues 158–160 (RDG).

Belongs to the actinoporin family. HALT subfamily. Octamer or nonamer in membranes. Monomer in the soluble state. In vitro, interacts with folate receptor alpha (of target organism).

The protein resides in the nematocyst. It localises to the secreted. It is found in the target cell membrane. Pore-forming protein that forms hydrophilic pores and causes cytolysis. Compared to equinatoxin-2 (AC P61914), it reveals lower cytolysis activity (5-12-fold difference, tested on erythrocytes), a larger pore size (probably 2-3 nm) and different affinity to membrane lipids (100-fold lower affinity to sphingomyelin). Binds to sulfatides (SFT) as well as to the two sphingolipids, lysophosphatidic acid (LPA) and sphingosine-1-phosphate (S1P). It seems to bind more strongly to LPA than to S1P and SFT. Shows cytolytic activity on HeLa cells, with a different potency than its paralogs (from most potent to less potent: HALT-4&gt;HALT-6~HALT-1&gt;HALT-3&gt;HALT-7&gt;HALT-2). Pore formation is a multi-step process that involves specific recognition of membrane lipid by a protein aromatic residues rich region, firm binding to the membrane (mainly driven by hydrophobic interactions) accompanied by the transfer of the N-terminal region to the lipid-water interface and finally pore formation after oligomerization of monomers. In vitro, binds to the folate receptor alpha (FOLR1), a GPI-anchored membrane protein that plays a major role in the uptake of folate/folic acid into cells via endocytosis, suggesting a possible involvement of this receptor in the mechanism of HALT-1-induced cell lysis. In vivo, does not cause visible paralysis in larvae of the blowfly Sarcophaga faculata, the most common arthropod prey of Hydra. This is Hydra actinoporin-like toxin 5 from Hydra vulgaris (Hydra).